A 411-amino-acid chain; its full sequence is DHDYEFPGIQAFAGLGMGFGGSPGGGSLYLPSGNDGGLLSGSEKETMQNLNDRLASYLDKVRALEDANAELENKIREWYEARGHGHGDCGPQHDYSKYHPLIEDLRNKIISASIGNAQLILQIDNARLAADDFRMKFENEAALRQTVEADINGLRRVLDELTLARADLEAQIESLTEELAYMKKNHEEELQSCRAGGPGEVSVEMDAAPGVDLTRLLNDMRAQYEAIAEQNRKDAEAWFIEKSGELRKEISTNTEQLQSSKSEVTDLRRALQNLEIELQSQLAMKKSLEDSLAETEGDYCGQLSQVQQLVGDLEAQLQQVRSDTERQNMDYQRLLNVKARLELEIETYRRLLDGEAQGDGLDESSAMTGSRSQAQSIDSSKDPSKTRKIKTIVQEVVNGEVVSSQVQEIQN.

A head region spans residues 1-42; sequence DHDYEFPGIQAFAGLGMGFGGSPGGGSLYLPSGNDGGLLSGS. Positions 43 to 78 are coil 1A; it reads EKETMQNLNDRLASYLDKVRALEDANAELENKIREW. Residues 43–359 form the IF rod domain; the sequence is EKETMQNLND…RLLDGEAQGD (317 aa). Positions 83 to 101 are linker 1; the sequence is GHGHGDCGPQHDYSKYHPL. The segment at 102–193 is coil 1B; sequence IEDLRNKIIS…KNHEEELQSC (92 aa). The interval 194–216 is linker 12; it reads RAGGPGEVSVEMDAAPGVDLTRL. Positions 217 to 354 are coil 2; it reads LNDMRAQYEA…IETYRRLLDG (138 aa). The segment at 355-411 is tail; it reads EAQGDGLDESSAMTGSRSQAQSIDSSKDPSKTRKIKTIVQEVVNGEVVSSQVQEIQN. The disordered stretch occupies residues 356–387; the sequence is AQGDGLDESSAMTGSRSQAQSIDSSKDPSKTR. Residues 365–378 are compositionally biased toward polar residues; it reads SAMTGSRSQAQSID.

This sequence belongs to the intermediate filament family. As to quaternary structure, heterotetramer of two type I and two type II keratins. Keratin-3 associates with keratin-12. As to expression, cornea specific. Associated mainly with all layers of the central corneal epithelium and also found in the suprabasal limbal epithelium.

Involved in corneal epithelium organization, integrity and corneal keratin expression. The protein is Keratin, type I cytoskeletal 12 (KRT12) of Oryctolagus cuniculus (Rabbit).